The sequence spans 431 residues: Histidinol dehydrogenase (431 aa).

3 residues coordinate NAD(+): Tyr127, Gln185, and Asn208. The substrate site is built by Ser234, Gln256, and His259. Zn(2+) contacts are provided by Gln256 and His259. Active-site proton acceptor residues include Glu323 and His324. Substrate-binding residues include His324, Asp357, Glu411, and His416. Position 357 (Asp357) interacts with Zn(2+). Position 416 (His416) interacts with Zn(2+).

Belongs to the histidinol dehydrogenase family. The cofactor is Zn(2+).

It carries out the reaction L-histidinol + 2 NAD(+) + H2O = L-histidine + 2 NADH + 3 H(+). It participates in amino-acid biosynthesis; L-histidine biosynthesis; L-histidine from 5-phospho-alpha-D-ribose 1-diphosphate: step 9/9. Catalyzes the sequential NAD-dependent oxidations of L-histidinol to L-histidinaldehyde and then to L-histidine. The protein is Histidinol dehydrogenase of Vibrio vulnificus (strain CMCP6).